A 1259-amino-acid chain; its full sequence is Trafficking protein particle complex II-specific subunit 130 homolog (1259 aa).

At A2 the chain carries N-acetylalanine. The disordered stretch occupies residues 479-526 (GNIPEMFDGRPSFTEGSGLEASPRTPSSLKVQAPPMSRTNSSPGNFES).

This sequence belongs to the TMEM1 family. As to quaternary structure, part of the multisubunit TRAPP (transport protein particle) II complex composed of BET3, BET5, TRS20, TRS23, TRS31, TRS33, TRS65, TRS85, TRS120 and TRS130.

Its subcellular location is the golgi apparatus. It localises to the trans-Golgi network. The protein resides in the early endosome. Functionally, specific subunit of the TRAPP II complex, a highly conserved vesicle tethering complex that is required for the proper transport of proteins in post-Golgi trafficking pathways to the growing cell plate in mitotic active cells. Required for the polarized and selective transport of PIN2, but not PIN1, to the plasma membrane. Not required for ER-to-Golgi as well as biosynthetic and endocytic vacuolar transport. The polypeptide is Trafficking protein particle complex II-specific subunit 130 homolog (Arabidopsis thaliana (Mouse-ear cress)).